Reading from the N-terminus, the 41-residue chain is Alpha-conotoxin-like Pu1.2 (41 aa).

A propeptide spanning residues 1–21 (LDGRNAAADFETSDLLAMTIR) is cleaved from the precursor. 2 disulfide bridges follow: Cys-24/Cys-30 and Cys-25/Cys-37. Residue Cys-37 is modified to Cysteine amide. The propeptide occupies 38-41 (GGKR).

Belongs to the conotoxin A superfamily. In terms of processing, non-native isomers 'ribbon' (with disulfide connectivity C1-C4, C2-C3) and 'beads' (with disulfide connectivity C1-C2, C3-C4) also inhibit high voltage-activated (HVA) calcium channel currents in rat DRG neurons (25-30% inhibition at 1 uM toxin). Post-translationally, mutants Pu1.2(9-16), [C3S; C9S]Pu1.2 and [C4S]Pu1.2(1-9) are all C-terminally amidated. In terms of tissue distribution, expressed by the venom duct.

It localises to the secreted. Its function is as follows. Alpha-conotoxins act on postsynaptic membranes, they bind to the nicotinic acetylcholine receptors (nAChR) and thus inhibit them. This toxin also inhibits high voltage-activated (HVA) calcium channel currents in rat DRG neurons (27% inhibition at 1 uM toxin) probably by activating GABA(B) receptors (GABBR1 and/or GABBR2). In Conus pulicarius (Flea-bitten cone), this protein is Alpha-conotoxin-like Pu1.2.